The chain runs to 158 residues: Transcription elongation factor GreA (158 aa).

Belongs to the GreA/GreB family.

Functionally, necessary for efficient RNA polymerase transcription elongation past template-encoded arresting sites. The arresting sites in DNA have the property of trapping a certain fraction of elongating RNA polymerases that pass through, resulting in locked ternary complexes. Cleavage of the nascent transcript by cleavage factors such as GreA or GreB allows the resumption of elongation from the new 3'terminus. GreA releases sequences of 2 to 3 nucleotides. The chain is Transcription elongation factor GreA from Polaromonas naphthalenivorans (strain CJ2).